We begin with the raw amino-acid sequence, 279 residues long: Acetyl-coenzyme A carboxylase carboxyl transferase subunit beta (279 aa).

The 257-residue stretch at 23–279 (LWWKCESCGA…LSQILGHLSS (257 aa)) folds into the CoA carboxyltransferase N-terminal domain. Zn(2+) is bound by residues Cys-27, Cys-30, Cys-46, and Cys-49. Residues 27 to 49 (CESCGAMLHKKQVEDHFYTCCEC) form a C4-type zinc finger.

It belongs to the AccD/PCCB family. In terms of assembly, acetyl-CoA carboxylase is a heterohexamer composed of biotin carboxyl carrier protein (AccB), biotin carboxylase (AccC) and two subunits each of ACCase subunit alpha (AccA) and ACCase subunit beta (AccD). Zn(2+) is required as a cofactor.

It is found in the cytoplasm. It carries out the reaction N(6)-carboxybiotinyl-L-lysyl-[protein] + acetyl-CoA = N(6)-biotinyl-L-lysyl-[protein] + malonyl-CoA. It functions in the pathway lipid metabolism; malonyl-CoA biosynthesis; malonyl-CoA from acetyl-CoA: step 1/1. Component of the acetyl coenzyme A carboxylase (ACC) complex. Biotin carboxylase (BC) catalyzes the carboxylation of biotin on its carrier protein (BCCP) and then the CO(2) group is transferred by the transcarboxylase to acetyl-CoA to form malonyl-CoA. The chain is Acetyl-coenzyme A carboxylase carboxyl transferase subunit beta from Prosthecochloris aestuarii (strain DSM 271 / SK 413).